We begin with the raw amino-acid sequence, 229 residues long: Large ribosomal RNA subunit accumulation protein YCED homolog 2, chloroplastic (229 aa).

The N-terminal 42 residues, 1-42 (MDVRCLISPNLLNSKIKVSGNTHHLPFSSLSKKHQASSPIQA), are a transit peptide targeting the chloroplast.

It belongs to the DUF177 domain family.

It is found in the plastid. The protein localises to the chloroplast. May play a role in synthesis, processing and/or stability of 23S rRNA. The polypeptide is Large ribosomal RNA subunit accumulation protein YCED homolog 2, chloroplastic (Arabidopsis thaliana (Mouse-ear cress)).